Consider the following 126-residue polypeptide: Protein ApaG (126 aa).

The ApaG domain occupies 2–126; that stretch reads SALDTSIRVE…FRLTTPGLLH (125 aa).

The chain is Protein ApaG from Shewanella baltica (strain OS195).